A 332-amino-acid chain; its full sequence is Fructose-1,6-bisphosphatase class 1 (332 aa).

Positions 89, 110, 112, and 113 each coordinate Mg(2+). Substrate contacts are provided by residues 113-116, N206, Y239, 257-259, and K269; these read DGSS and YLY. E275 is a binding site for Mg(2+).

It belongs to the FBPase class 1 family. As to quaternary structure, homotetramer. Requires Mg(2+) as cofactor.

The protein localises to the cytoplasm. It catalyses the reaction beta-D-fructose 1,6-bisphosphate + H2O = beta-D-fructose 6-phosphate + phosphate. It participates in carbohydrate biosynthesis; gluconeogenesis. This is Fructose-1,6-bisphosphatase class 1 from Salmonella typhi.